Reading from the N-terminus, the 205-residue chain is Leucyl/phenylalanyl-tRNA--protein transferase (205 aa).

This sequence belongs to the L/F-transferase family.

Its subcellular location is the cytoplasm. It catalyses the reaction N-terminal L-lysyl-[protein] + L-leucyl-tRNA(Leu) = N-terminal L-leucyl-L-lysyl-[protein] + tRNA(Leu) + H(+). The enzyme catalyses N-terminal L-arginyl-[protein] + L-leucyl-tRNA(Leu) = N-terminal L-leucyl-L-arginyl-[protein] + tRNA(Leu) + H(+). The catalysed reaction is L-phenylalanyl-tRNA(Phe) + an N-terminal L-alpha-aminoacyl-[protein] = an N-terminal L-phenylalanyl-L-alpha-aminoacyl-[protein] + tRNA(Phe). Its function is as follows. Functions in the N-end rule pathway of protein degradation where it conjugates Leu, Phe and, less efficiently, Met from aminoacyl-tRNAs to the N-termini of proteins containing an N-terminal arginine or lysine. The polypeptide is Leucyl/phenylalanyl-tRNA--protein transferase (Mesorhizobium japonicum (strain LMG 29417 / CECT 9101 / MAFF 303099) (Mesorhizobium loti (strain MAFF 303099))).